Consider the following 651-residue polypeptide: UvrABC system protein C (651 aa).

The GIY-YIG domain occupies 20-97; that stretch reads ERCGVYRMFD…IKKFQPKFNI (78 aa). Residues 207–242 form the UVR domain; that stretch reads KALQENLSKKMEELSSQMRFEEAAEIRDRIKALSYV.

The protein belongs to the UvrC family. As to quaternary structure, interacts with UvrB in an incision complex.

Its subcellular location is the cytoplasm. Functionally, the UvrABC repair system catalyzes the recognition and processing of DNA lesions. UvrC both incises the 5' and 3' sides of the lesion. The N-terminal half is responsible for the 3' incision and the C-terminal half is responsible for the 5' incision. The chain is UvrABC system protein C from Rickettsia akari (strain Hartford).